The chain runs to 555 residues: MAVDPPKADPKGVVAVDPTANCGSGLKSREDQGAKAGGCCSSRDQVCRCLRANLLVLLTVAAAVAGVVLGLGVSAAGGAEALGHARFTAFAFPGELLLRLLEMIILPLVVCSLIGGAASLDPSALGRLGAWALLFFLVTTLLSSALGVALALALKPGAAFAAINSSVVDSSVHRAPTKEVLDSFLELLRNMFPSNLVSASAAFRIFATSYVSKDINTSGIHPCGACPQRSNATMDQPHCEMKMNILGLVVFAIVFGVALRKLGPEGELLIRFFNSFNDATMVLVSWIMWYAPIGILFLVAGKIVEMKDIRQLFIGLGKYIVCCLLGHAIHGLLVLPLIYFLFTRKNPYRFLWGIVTPLATAFGTSSSSATLPLMMKCVEEKNGVAKHISRFILPIGATVNMDGAALFQCVAAVFIAQLNGMSLDFVKIITILVTATASSVGAAGIPAGGVLTLAIILEAISLPVKDISLILAVDWLVDRSCTVLNVEGDAFGAGLLQSYVDRTKMPSSEPELIQVKNDVSLKPLPLATEEGNPLLKQCREPSGDSSATCEKESVM.

Position 1 is an N-acetylmethionine (methionine 1). The Cytoplasmic portion of the chain corresponds to 1–52 (MAVDPPKADPKGVVAVDPTANCGSGLKSREDQGAKAGGCCSSRDQVCRCLRA). The chain crosses the membrane as a helical span at residues 53-82 (NLLVLLTVAAAVAGVVLGLGVSAAGGAEAL). Over 83–95 (GHARFTAFAFPGE) the chain is Extracellular. The helical transmembrane segment at 96–117 (LLLRLLEMIILPLVVCSLIGGA) threads the bilayer. Over 118-131 (ASLDPSALGRLGAW) the chain is Cytoplasmic. The chain crosses the membrane as a helical span at residues 132–154 (ALLFFLVTTLLSSALGVALALAL). The Extracellular segment spans residues 155 to 239 (KPGAAFAAIN…SNATMDQPHC (85 aa)). Asparagine 164 and asparagine 231 each carry an N-linked (GlcNAc...) asparagine glycan. The chain crosses the membrane as a helical span at residues 240-262 (EMKMNILGLVVFAIVFGVALRKL). Residues 263 to 271 (GPEGELLIR) are Cytoplasmic-facing. Residues 272 to 299 (FFNSFNDATMVLVSWIMWYAPIGILFLV) traverse the membrane as a helical segment. The Extracellular portion of the chain corresponds to 300 to 320 (AGKIVEMKDIRQLFIGLGKYI). Residues 321-342 (VCCLLGHAIHGLLVLPLIYFLF) form a helical membrane-spanning segment. The Cytoplasmic portion of the chain corresponds to 343 to 347 (TRKNP). Residues 348–378 (YRFLWGIVTPLATAFGTSSSSATLPLMMKCV) constitute an intramembrane region (discontinuously helical). Residues 379–387 (EEKNGVAKH) are Cytoplasmic-facing. The chain crosses the membrane as a helical span at residues 388-414 (ISRFILPIGATVNMDGAALFQCVAAVF). 3 residues coordinate Na(+): glycine 396, threonine 398, and asparagine 400. At 415-427 (IAQLNGMSLDFVK) the chain is on the extracellular side. Positions 428–461 (IITILVTATASSVGAAGIPAGGVLTLAIILEAIS) form an intramembrane region, discontinuously helical. The Extracellular portion of the chain corresponds to 462 to 474 (LPVKDISLILAVD). A helical membrane pass occupies residues 475 to 496 (WLVDRSCTVLNVEGDAFGAGLL). The Na(+) site is built by asparagine 485 and aspartate 489. Residues 497–555 (QSYVDRTKMPSSEPELIQVKNDVSLKPLPLATEEGNPLLKQCREPSGDSSATCEKESVM) are Cytoplasmic-facing. A phosphoserine mark is found at serine 507, serine 508, serine 520, serine 545, and serine 553. Residues 534–555 (LLKQCREPSGDSSATCEKESVM) are disordered.

Belongs to the dicarboxylate/amino acid:cation symporter (DAACS) (TC 2.A.23) family. In terms of assembly, homotrimer.

It localises to the cell membrane. It is found in the melanosome. The catalysed reaction is L-glutamine(out) + L-serine(in) + Na(+)(out) = L-glutamine(in) + L-serine(out) + Na(+)(in). It carries out the reaction L-glutamine(in) + L-serine(out) + Na(+)(out) = L-glutamine(out) + L-serine(in) + Na(+)(in). It catalyses the reaction L-threonine(in) + L-glutamine(out) + Na(+)(out) = L-threonine(out) + L-glutamine(in) + Na(+)(in). The enzyme catalyses L-threonine(out) + L-glutamine(in) + Na(+)(out) = L-threonine(in) + L-glutamine(out) + Na(+)(in). The catalysed reaction is L-asparagine(in) + L-glutamine(out) + Na(+)(out) = L-asparagine(out) + L-glutamine(in) + Na(+)(in). It carries out the reaction L-asparagine(out) + L-glutamine(in) + Na(+)(out) = L-asparagine(in) + L-glutamine(out) + Na(+)(in). It catalyses the reaction L-glutamine(in) + L-alanine(out) + Na(+)(out) = L-glutamine(out) + L-alanine(in) + Na(+)(in). The enzyme catalyses L-valine(out) + L-glutamine(in) + Na(+)(out) = L-valine(in) + L-glutamine(out) + Na(+)(in). The catalysed reaction is L-glutamine(in) + L-methionine(out) + Na(+)(out) = L-glutamine(out) + L-methionine(in) + Na(+)(in). It carries out the reaction L-glutamine(in) + L-glutamate(out) + Na(+)(out) + H(+)(out) = L-glutamine(out) + L-glutamate(in) + Na(+)(in) + H(+)(in). It catalyses the reaction D-serine(in) + L-glutamine(out) + Na(+)(out) = D-serine(out) + L-glutamine(in) + Na(+)(in). The enzyme catalyses D-serine(in) + L-alanine(out) + Na(+)(out) = D-serine(out) + L-alanine(in) + Na(+)(in). The catalysed reaction is nitrate(in) = nitrate(out). It carries out the reaction iodide(out) = iodide(in). It catalyses the reaction thiocyanate(in) = thiocyanate(out). With respect to regulation, down-regulated at acidic pH. Sodium-coupled antiporter of neutral amino acids. In a tri-substrate transport cycle, exchanges neutral amino acids between the extracellular and intracellular compartments, coupled to the inward cotransport of at least one sodium ion. The preferred substrate is the essential amino acid L-glutamine, a precursor for biosynthesis of proteins, nucleotides and amine sugars as well as an alternative fuel for mitochondrial oxidative phosphorylation. Exchanges L-glutamine with other neutral amino acids such as L-serine, L-threonine and L-asparagine in a bidirectional way. Provides L-glutamine to proliferating stem and activated cells driving the metabolic switch toward cell differentiation. The transport cycle is usually pH-independent, with the exception of L-glutamate. Transports extracellular L-glutamate coupled to the cotransport of one proton and one sodium ion in exchange for intracellular L-glutamine counter-ion. May provide for L-glutamate uptake in glial cells regulating glutamine/glutamate cycle in the nervous system. Can transport D-amino acids. Mediates D-serine release from the retinal glia potentially affecting NMDA receptor function in retinal neurons. Displays sodium- and amino acid-dependent but uncoupled channel-like anion conductance with a preference SCN(-) &gt;&gt; NO3(-) &gt; I(-) &gt; Cl(-). Through binding of the fusogenic protein syncytin-1/ERVW-1 may mediate trophoblasts syncytialization, the spontaneous fusion of their plasma membranes, an essential process in placental development. The protein is Neutral amino acid transporter B(0) (Slc1a5) of Rattus norvegicus (Rat).